A 335-amino-acid polypeptide reads, in one-letter code: Beta-ketoacyl-[acyl-carrier-protein] synthase III (335 aa).

Catalysis depends on residues Cys-120 and His-261. Positions 262 to 266 are ACP-binding; the sequence is QANER. Asn-291 is an active-site residue.

Belongs to the thiolase-like superfamily. FabH family. In terms of assembly, homodimer.

Its subcellular location is the cytoplasm. The catalysed reaction is malonyl-[ACP] + acetyl-CoA + H(+) = 3-oxobutanoyl-[ACP] + CO2 + CoA. It functions in the pathway lipid metabolism; fatty acid biosynthesis. Its function is as follows. Catalyzes the condensation reaction of fatty acid synthesis by the addition to an acyl acceptor of two carbons from malonyl-ACP. Catalyzes the first condensation reaction which initiates fatty acid synthesis and may therefore play a role in governing the total rate of fatty acid production. Possesses both acetoacetyl-ACP synthase and acetyl transacylase activities. Its substrate specificity determines the biosynthesis of branched-chain and/or straight-chain of fatty acids. The sequence is that of Beta-ketoacyl-[acyl-carrier-protein] synthase III from Chlamydia pneumoniae (Chlamydophila pneumoniae).